A 473-amino-acid chain; its full sequence is Chaperone SurA (473 aa).

A signal peptide spans 1–36; sequence MTNDRLFAGIARVLSVRPLAAALALLLTLPLIGVQA. PpiC domains lie at 214 to 315 and 326 to 425; these read SLAL…KVIE and ITQT…QVLE.

The protein resides in the periplasm. It catalyses the reaction [protein]-peptidylproline (omega=180) = [protein]-peptidylproline (omega=0). In terms of biological role, chaperone involved in the correct folding and assembly of outer membrane proteins. Recognizes specific patterns of aromatic residues and the orientation of their side chains, which are found more frequently in integral outer membrane proteins. May act in both early periplasmic and late outer membrane-associated steps of protein maturation. The protein is Chaperone SurA of Polaromonas sp. (strain JS666 / ATCC BAA-500).